A 908-amino-acid polypeptide reads, in one-letter code: DNA mismatch repair protein MutS (908 aa).

Gly662–Ser669 lines the ATP pocket.

The protein belongs to the DNA mismatch repair MutS family.

Its function is as follows. This protein is involved in the repair of mismatches in DNA. It is possible that it carries out the mismatch recognition step. This protein has a weak ATPase activity. In Rhizobium etli (strain ATCC 51251 / DSM 11541 / JCM 21823 / NBRC 15573 / CFN 42), this protein is DNA mismatch repair protein MutS.